A 431-amino-acid chain; its full sequence is Glutamate-1-semialdehyde 2,1-aminomutase (431 aa).

Position 269 is an N6-(pyridoxal phosphate)lysine (Lys-269).

Belongs to the class-III pyridoxal-phosphate-dependent aminotransferase family. HemL subfamily. As to quaternary structure, homodimer. It depends on pyridoxal 5'-phosphate as a cofactor.

The protein resides in the cytoplasm. It catalyses the reaction (S)-4-amino-5-oxopentanoate = 5-aminolevulinate. It participates in porphyrin-containing compound metabolism; protoporphyrin-IX biosynthesis; 5-aminolevulinate from L-glutamyl-tRNA(Glu): step 2/2. Its pathway is porphyrin-containing compound metabolism; chlorophyll biosynthesis. In Chlorobium luteolum (strain DSM 273 / BCRC 81028 / 2530) (Pelodictyon luteolum), this protein is Glutamate-1-semialdehyde 2,1-aminomutase.